A 287-amino-acid chain; its full sequence is Cyclopropane mycolic acid synthase MmaA2 (287 aa).

S-adenosyl-L-methionine-binding positions include tyrosine 33–serine 34, glycine 72–glycine 74, threonine 94–glutamine 99, tryptophan 123–glutamate 124, and isoleucine 136. Cysteine 269 is a catalytic residue.

This sequence belongs to the CFA/CMAS family.

It carries out the reaction a 1-acyl-2-(9Z)-enoyl-sn-glycero-3-phospholipid + S-adenosyl-L-methionine = a 1-acyl-2-(9-cyclopronane)-acyl-sn-glycero-3-phospholipid + S-adenosyl-L-homocysteine + H(+). Its pathway is lipid metabolism; mycolic acid biosynthesis. Functionally, catalyzes the conversion of a double bond to a cis cyclopropane ring at the distal position of an alpha mycolic acid via the transfer of a methylene group from S-adenosyl-L-methionine. MmaA2 also catalyzes the biosynthesis of the cis-cyclopropanated methoxymycolates. Cyclopropanated mycolic acids are key factors participating in cell envelope permeability, host immunomodulation and persistence. This is Cyclopropane mycolic acid synthase MmaA2 (cmaC) from Mycobacterium bovis (strain ATCC BAA-935 / AF2122/97).